The following is a 473-amino-acid chain: 3-isopropylmalate dehydratase large subunit (473 aa).

Residues cysteine 349, cysteine 409, and cysteine 412 each coordinate [4Fe-4S] cluster.

This sequence belongs to the aconitase/IPM isomerase family. LeuC type 1 subfamily. In terms of assembly, heterodimer of LeuC and LeuD. The cofactor is [4Fe-4S] cluster.

The enzyme catalyses (2R,3S)-3-isopropylmalate = (2S)-2-isopropylmalate. Its pathway is amino-acid biosynthesis; L-leucine biosynthesis; L-leucine from 3-methyl-2-oxobutanoate: step 2/4. Functionally, catalyzes the isomerization between 2-isopropylmalate and 3-isopropylmalate, via the formation of 2-isopropylmaleate. The sequence is that of 3-isopropylmalate dehydratase large subunit from Gloeobacter violaceus (strain ATCC 29082 / PCC 7421).